Reading from the N-terminus, the 607-residue chain is MNIVAKTIPLVVTTGPHAASTKIHKPGILHPHIRVPMREIAVHPTAGEPPVTVYDSSGPYTDPSHPVLIENGLPRLRHDWVVARGDVEAYEGRHVKPEDNGFATGERLTPEFSVRHQPLKATAGKAVTQLAYARAGIITPEMEFIAIRENLGREAAKEKPTRDGESFGAHIPDYVTAEFVRQEVASGRAIIPANINHPELEPMIIGRNFLVKINANIGNSAVTSSMAEEVEKMVWAIRWGADTVMDLSTGRNIHNIREWIIRNSPVPIGTVPLYQALEKVNGIAEDLNWEVFRDTLIEQAEQGVDYFTIHAGVRLHYIPLTVNRVTGIVSRGGSIMAKWCLHHHKESFLYEHFEEICDICRAYDVSFSLGDGLRPGSIADANDAAQFAELETLGELTQIAWARDCQVMIEGPGHVPMHKIKENMDKQLKTCGEAPFYTLGPLTTDIAPGYDHITSGIGAAMIGWFGTAMLCYVTPKEHLGLPDRNDVKVGVITYKIAAHAADLAKGHPAAQVRDDALSRARFEFRWEDQFNLSLDPDTARSFHDETLPKEAHKVAHFCSMCGPKFCSMRISHDIRAEAQKEGLEAMAARFKEGGELYMPLPTPASAE.

Substrate-binding positions include asparagine 216, methionine 245, tyrosine 274, histidine 310, serine 330–glycine 332, aspartate 371–arginine 374, and glutamate 410. A Zn(2+)-binding site is contributed by histidine 414. Tyrosine 437 is a substrate binding site. Histidine 478 serves as a coordination point for Zn(2+). Residues cysteine 558, cysteine 561, and cysteine 566 each coordinate [4Fe-4S] cluster.

Belongs to the ThiC family. In terms of assembly, homodimer. It depends on [4Fe-4S] cluster as a cofactor.

It catalyses the reaction 5-amino-1-(5-phospho-beta-D-ribosyl)imidazole + S-adenosyl-L-methionine = 4-amino-2-methyl-5-(phosphooxymethyl)pyrimidine + CO + 5'-deoxyadenosine + formate + L-methionine + 3 H(+). The protein operates within cofactor biosynthesis; thiamine diphosphate biosynthesis. Its function is as follows. Catalyzes the synthesis of the hydroxymethylpyrimidine phosphate (HMP-P) moiety of thiamine from aminoimidazole ribotide (AIR) in a radical S-adenosyl-L-methionine (SAM)-dependent reaction. In Agrobacterium fabrum (strain C58 / ATCC 33970) (Agrobacterium tumefaciens (strain C58)), this protein is Phosphomethylpyrimidine synthase.